The following is a 490-amino-acid chain: Costunolide synthase (490 aa).

The chain crosses the membrane as a helical; Signal-anchor for type II membrane protein span at residues 3 to 23 (PLTIVSLAVASFLLFAFWALS). N-linked (GlcNAc...) asparagine glycans are attached at residues Asn-167 and Asn-255. Cys-432 lines the heme pocket.

It belongs to the cytochrome P450 family. The cofactor is heme.

The protein resides in the membrane. It carries out the reaction germacra-1(10),4,11(13)-trien-12-oate + reduced [NADPH--hemoprotein reductase] + O2 = (+)-costunolide + oxidized [NADPH--hemoprotein reductase] + 2 H2O. Its pathway is secondary metabolite biosynthesis; terpenoid biosynthesis. In terms of biological role, involved in the biosynthesis of germacrene-derived sesquiterpene lactones. Component of the parthenolide biosynthetic pathway; parthenolide and conjugates are promising anti-cancer drugs highly active against colon cancer cells. Hydroxylates germacrene A acid to 6-alpha-hydroxy-germacrne A acid, a precursor of sesquiterpene lactones that spontaneously undergoes a lactonization which yields costunolide. The protein is Costunolide synthase of Lactuca sativa (Garden lettuce).